We begin with the raw amino-acid sequence, 143 residues long: Ribosome-binding factor A (143 aa).

The tract at residues 123 to 143 (DKSLQENYKQNDKETKAEKLR) is disordered.

This sequence belongs to the RbfA family. Monomer. Binds 30S ribosomal subunits, but not 50S ribosomal subunits or 70S ribosomes.

It localises to the cytoplasm. In terms of biological role, one of several proteins that assist in the late maturation steps of the functional core of the 30S ribosomal subunit. Associates with free 30S ribosomal subunits (but not with 30S subunits that are part of 70S ribosomes or polysomes). Required for efficient processing of 16S rRNA. May interact with the 5'-terminal helix region of 16S rRNA. In Francisella tularensis subsp. novicida (strain U112), this protein is Ribosome-binding factor A.